Here is a 231-residue protein sequence, read N- to C-terminus: Cytidylate kinase (231 aa).

12-20 (GPSGAGKGT) contributes to the ATP binding site.

This sequence belongs to the cytidylate kinase family. Type 1 subfamily.

Its subcellular location is the cytoplasm. The enzyme catalyses CMP + ATP = CDP + ADP. The catalysed reaction is dCMP + ATP = dCDP + ADP. The polypeptide is Cytidylate kinase (Shewanella amazonensis (strain ATCC BAA-1098 / SB2B)).